We begin with the raw amino-acid sequence, 116 residues long: Large ribosomal subunit protein uL18 (116 aa).

This sequence belongs to the universal ribosomal protein uL18 family. As to quaternary structure, part of the 50S ribosomal subunit; part of the 5S rRNA/L5/L18/L25 subcomplex. Contacts the 5S and 23S rRNAs.

Its function is as follows. This is one of the proteins that bind and probably mediate the attachment of the 5S RNA into the large ribosomal subunit, where it forms part of the central protuberance. This Shewanella sp. (strain ANA-3) protein is Large ribosomal subunit protein uL18.